The following is a 196-amino-acid chain: Probable GTP-binding protein EngB (196 aa).

The EngB-type G domain maps to 24–196; it reads ELSEVALSGR…IWNLIEPYIS (173 aa). GTP-binding positions include 32 to 39, 59 to 63, 77 to 80, 144 to 147, and 176 to 178; these read GRSNVGKS, GKTQT, DVPG, TKED, and YSS. Mg(2+)-binding residues include Ser-39 and Thr-61.

It belongs to the TRAFAC class TrmE-Era-EngA-EngB-Septin-like GTPase superfamily. EngB GTPase family. Requires Mg(2+) as cofactor.

Necessary for normal cell division and for the maintenance of normal septation. This Staphylococcus aureus (strain MRSA252) protein is Probable GTP-binding protein EngB.